Reading from the N-terminus, the 101-residue chain is NADH-quinone oxidoreductase subunit K (101 aa).

Helical transmembrane passes span 4 to 24, 30 to 50, and 61 to 81; these read LGYF…GIII, IVLL…FIAF, and IFVF…LAIL.

This sequence belongs to the complex I subunit 4L family. NDH-1 is composed of 14 different subunits. Subunits NuoA, H, J, K, L, M, N constitute the membrane sector of the complex.

Its subcellular location is the cell inner membrane. It carries out the reaction a quinone + NADH + 5 H(+)(in) = a quinol + NAD(+) + 4 H(+)(out). In terms of biological role, NDH-1 shuttles electrons from NADH, via FMN and iron-sulfur (Fe-S) centers, to quinones in the respiratory chain. The immediate electron acceptor for the enzyme in this species is believed to be ubiquinone. Couples the redox reaction to proton translocation (for every two electrons transferred, four hydrogen ions are translocated across the cytoplasmic membrane), and thus conserves the redox energy in a proton gradient. This Coxiella burnetii (strain CbuG_Q212) (Coxiella burnetii (strain Q212)) protein is NADH-quinone oxidoreductase subunit K.